The primary structure comprises 234 residues: uncharacterized protein (234 aa).

2 disordered regions span residues 1 to 65 (MTSV…RRGP) and 182 to 234 (ARGA…GRKT).

This is an uncharacterized protein from Homo sapiens (Human).